The sequence spans 892 residues: DNA ligase (892 aa).

The interval 1-23 (MTMTNRDDSEQLAWDFDAPESDG) is disordered. NAD(+) contacts are provided by residues 99–103 (DAAYD), 148–149 (SL), and Glu-182. The active-site N6-AMP-lysine intermediate is the Lys-184. The NAD(+) site is built by Arg-205, Glu-244, Lys-369, and Lys-393. 4 residues coordinate Zn(2+): Cys-490, Cys-493, Cys-509, and Cys-515. In terms of domain architecture, BRCT spans 810–892 (GLPQTLAGKT…KQLLDTGTVE (83 aa)).

It belongs to the NAD-dependent DNA ligase family. LigA subfamily. The cofactor is Mg(2+). It depends on Mn(2+) as a cofactor.

It catalyses the reaction NAD(+) + (deoxyribonucleotide)n-3'-hydroxyl + 5'-phospho-(deoxyribonucleotide)m = (deoxyribonucleotide)n+m + AMP + beta-nicotinamide D-nucleotide.. DNA ligase that catalyzes the formation of phosphodiester linkages between 5'-phosphoryl and 3'-hydroxyl groups in double-stranded DNA using NAD as a coenzyme and as the energy source for the reaction. It is essential for DNA replication and repair of damaged DNA. The protein is DNA ligase of Bifidobacterium adolescentis (strain ATCC 15703 / DSM 20083 / NCTC 11814 / E194a).